The following is a 169-amino-acid chain: Putative prolyl-tRNA synthetase associated domain-containing protein 1 (169 aa).

Belongs to the PRORSD1 family.

The chain is Putative prolyl-tRNA synthetase associated domain-containing protein 1 (PRORSD1P) from Homo sapiens (Human).